The chain runs to 431 residues: Adenylosuccinate synthetase (431 aa).

Residues 12–18 (GDEGKGK) and 40–42 (GHT) each bind GTP. The active-site Proton acceptor is the aspartate 13. Mg(2+)-binding residues include aspartate 13 and glycine 40. IMP is bound by residues 13–16 (DEGK), 38–41 (NAGH), threonine 128, arginine 142, glutamine 225, threonine 240, and arginine 304. Histidine 41 serves as the catalytic Proton donor. 300–306 (TTTGRPR) contributes to the substrate binding site. GTP is bound by residues arginine 306, 332 to 334 (KLD), and 414 to 416 (GVG).

This sequence belongs to the adenylosuccinate synthetase family. Homodimer. Mg(2+) is required as a cofactor.

Its subcellular location is the cytoplasm. It carries out the reaction IMP + L-aspartate + GTP = N(6)-(1,2-dicarboxyethyl)-AMP + GDP + phosphate + 2 H(+). It functions in the pathway purine metabolism; AMP biosynthesis via de novo pathway; AMP from IMP: step 1/2. Its function is as follows. Plays an important role in the de novo pathway of purine nucleotide biosynthesis. Catalyzes the first committed step in the biosynthesis of AMP from IMP. This Thermomicrobium roseum (strain ATCC 27502 / DSM 5159 / P-2) protein is Adenylosuccinate synthetase.